Here is a 120-residue protein sequence, read N- to C-terminus: Large ribosomal subunit protein uL22 (120 aa).

The protein belongs to the universal ribosomal protein uL22 family. In terms of assembly, part of the 50S ribosomal subunit.

In terms of biological role, this protein binds specifically to 23S rRNA; its binding is stimulated by other ribosomal proteins, e.g. L4, L17, and L20. It is important during the early stages of 50S assembly. It makes multiple contacts with different domains of the 23S rRNA in the assembled 50S subunit and ribosome. Its function is as follows. The globular domain of the protein is located near the polypeptide exit tunnel on the outside of the subunit, while an extended beta-hairpin is found that lines the wall of the exit tunnel in the center of the 70S ribosome. This chain is Large ribosomal subunit protein uL22, found in Acaryochloris marina (strain MBIC 11017).